A 265-amino-acid chain; its full sequence is Tryptophan synthase alpha chain (265 aa).

Catalysis depends on proton acceptor residues E45 and D56.

This sequence belongs to the TrpA family. In terms of assembly, tetramer of two alpha and two beta chains.

It catalyses the reaction (1S,2R)-1-C-(indol-3-yl)glycerol 3-phosphate + L-serine = D-glyceraldehyde 3-phosphate + L-tryptophan + H2O. The protein operates within amino-acid biosynthesis; L-tryptophan biosynthesis; L-tryptophan from chorismate: step 5/5. The alpha subunit is responsible for the aldol cleavage of indoleglycerol phosphate to indole and glyceraldehyde 3-phosphate. This is Tryptophan synthase alpha chain from Halalkalibacterium halodurans (strain ATCC BAA-125 / DSM 18197 / FERM 7344 / JCM 9153 / C-125) (Bacillus halodurans).